The chain runs to 387 residues: Ferrochelatase (387 aa).

H196 and E277 together coordinate Fe cation.

The protein belongs to the ferrochelatase family.

It is found in the cytoplasm. The catalysed reaction is heme b + 2 H(+) = protoporphyrin IX + Fe(2+). Its pathway is porphyrin-containing compound metabolism; protoheme biosynthesis; protoheme from protoporphyrin-IX: step 1/1. Catalyzes the ferrous insertion into protoporphyrin IX. The sequence is that of Ferrochelatase from Synechococcus sp. (strain RCC307).